The sequence spans 483 residues: Rhamnulokinase (483 aa).

Position 11 to 15 (11 to 15 (ASSGR)) interacts with ATP. Substrate-binding positions include Gly-79 and 234–236 (HDT). Asp-235 acts as the Proton acceptor in catalysis. Residue Thr-257 participates in ATP binding. Asn-294 contacts substrate. Gln-302 contacts ATP. A disulfide bridge connects residues Cys-352 and Cys-369. Residue Gly-401 coordinates ATP.

It belongs to the rhamnulokinase family. Mg(2+) serves as cofactor.

The enzyme catalyses L-rhamnulose + ATP = L-rhamnulose 1-phosphate + ADP + H(+). Its pathway is carbohydrate degradation; L-rhamnose degradation; glycerone phosphate from L-rhamnose: step 2/3. In terms of biological role, involved in the catabolism of L-rhamnose (6-deoxy-L-mannose). Catalyzes the transfer of the gamma-phosphate group from ATP to the 1-hydroxyl group of L-rhamnulose to yield L-rhamnulose 1-phosphate. The chain is Rhamnulokinase from Listeria monocytogenes serovar 1/2a (strain ATCC BAA-679 / EGD-e).